The chain runs to 440 residues: MHFLDENIQIKIDKFYKKNSLDKNRVIVAFSGGADSTALLLNLKYYLSNNVIAFYFAHFIRSDNEQNQEIEHVKGFCDLYNIALQIKKCDIDIKSESARLGVSIEELARKFRYIALENALKENGANYIALAHNENDQIETIIMRFFQGSFLDGLSGIPSVNRNIIRPLLEVSRLEIENFLSLNNIGFFVDSTNAQNLYLRNRVRNNLLPAIKKVFKGYEKCLKRISEFSKEFADYFGKDEFFPVEKGKYYYSFDLKTFLDFPKYLVFRLIFKILNSEGIAAKVSYKALNEAFKVEINRKKNNVLLKTNDFFLEKRHNKINLIFKRDEKFYKPFDFILEVGKWHSLSLGKILLKYLECNAASVSRLKCCSYEFRYKFFKDRLKAKKFFSKFIRCNPAYLMLLALDNRLIGIIDLNTLNLVWSEKSILKKINISLIGGLLKE.

Ser-31–Ser-36 provides a ligand contact to ATP.

It belongs to the tRNA(Ile)-lysidine synthase family.

The protein resides in the cytoplasm. The catalysed reaction is cytidine(34) in tRNA(Ile2) + L-lysine + ATP = lysidine(34) in tRNA(Ile2) + AMP + diphosphate + H(+). Its function is as follows. Ligates lysine onto the cytidine present at position 34 of the AUA codon-specific tRNA(Ile) that contains the anticodon CAU, in an ATP-dependent manner. Cytidine is converted to lysidine, thus changing the amino acid specificity of the tRNA from methionine to isoleucine. This Borreliella burgdorferi (strain ATCC 35210 / DSM 4680 / CIP 102532 / B31) (Borrelia burgdorferi) protein is tRNA(Ile)-lysidine synthase.